The chain runs to 346 residues: MSYKIVALPGDGIGPEILNGSLEILQQLSKEFHFEYELESHDFGGIAIDNHGKPLPDSTLNACKNADAILLGAVGGPKWTDPNNRPEQGLLGIRKALGLFANIRPTTVTNGTSHLSPIKEERVANTDFILVRELTGGIYFGEPKQLSENDALDSLTYTRDEIERIARVGFELAQKRHKKLTSVDKENVLSSSKLWRNVINEVSQSYPDVEVNHLLVDACAMHLITNPSQFDVIVTENLFGDILSDEASVIPGSLGLSPSASFSEQGPRLYEPIHGSAPDIANQDIANPFGMLLSVAMCLRESLNEDKAADKLENVIYQLIKEGKTTRDLNGNYLTSEIFNYVKENL.

76-87 lines the NAD(+) pocket; sequence GPKWTDPNNRPE. Arg94, Arg104, Arg132, and Asp217 together coordinate substrate. The Mg(2+) site is built by Asp217, Asp241, and Asp245. 275–287 serves as a coordination point for NAD(+); it reads GSAPDIANQDIAN.

Belongs to the isocitrate and isopropylmalate dehydrogenases family. LeuB type 1 subfamily. Homodimer. The cofactor is Mg(2+). Mn(2+) is required as a cofactor.

It is found in the cytoplasm. The catalysed reaction is (2R,3S)-3-isopropylmalate + NAD(+) = 4-methyl-2-oxopentanoate + CO2 + NADH. It participates in amino-acid biosynthesis; L-leucine biosynthesis; L-leucine from 3-methyl-2-oxobutanoate: step 3/4. In terms of biological role, catalyzes the oxidation of 3-carboxy-2-hydroxy-4-methylpentanoate (3-isopropylmalate) to 3-carboxy-4-methyl-2-oxopentanoate. The product decarboxylates to 4-methyl-2 oxopentanoate. The sequence is that of 3-isopropylmalate dehydrogenase from Staphylococcus saprophyticus subsp. saprophyticus (strain ATCC 15305 / DSM 20229 / NCIMB 8711 / NCTC 7292 / S-41).